The chain runs to 499 residues: Endoglucanase (499 aa).

The first 29 residues, Met1–Ala29, serve as a signal peptide directing secretion. Residues His65, Trp69 to Tyr70, Tyr96, and His131 contribute to the substrate site. The active-site Proton donor is the Glu169. Tyr231 contributes to the substrate binding site. Glu257 serves as the catalytic Nucleophile. Substrate contacts are provided by residues Ala263–Ser264, Trp291, and Lys296–Glu298. The span at Arg330–Pro340 shows a compositional bias: basic and acidic residues. The tract at residues Arg330–Gly353 is disordered. One can recognise a CBM3 domain in the interval Gln350–Asn499.

It belongs to the glycosyl hydrolase 5 (cellulase A) family.

It carries out the reaction Endohydrolysis of (1-&gt;4)-beta-D-glucosidic linkages in cellulose, lichenin and cereal beta-D-glucans.. The polypeptide is Endoglucanase (bglC) (Bacillus subtilis).